Reading from the N-terminus, the 143-residue chain is Large ribosomal subunit protein uL13 (143 aa).

The protein belongs to the universal ribosomal protein uL13 family. Part of the 50S ribosomal subunit.

In terms of biological role, this protein is one of the early assembly proteins of the 50S ribosomal subunit, although it is not seen to bind rRNA by itself. It is important during the early stages of 50S assembly. The chain is Large ribosomal subunit protein uL13 from Dehalococcoides mccartyi (strain ATCC BAA-2100 / JCM 16839 / KCTC 5957 / BAV1).